The chain runs to 239 residues: Transmembrane ascorbate ferrireductase 1 (239 aa).

Residues 1-7 (MAVRINA) lie on the Cytoplasmic side of the membrane. A helical transmembrane segment spans residues 8-28 (MAVTFVAHALAVIAAIMVLVW). The Cytochrome b561 domain occupies 13 to 216 (VAHALAVIAA…FGAFVVLTAS (204 aa)). Residues 29 to 45 (SISYRGGLAWEATNKNL) lie on the Lumenal side of the membrane. Residues 46–66 (IFNLHPVLMLIGFIILGGEAI) traverse the membrane as a helical segment. A heme b-binding site is contributed by histidine 50. The Cytoplasmic segment spans residues 67–81 (ISYKSLPLEKPVKKL). Residues 82 to 102 (IHLILHAIALALGIFGICAAF) traverse the membrane as a helical segment. Heme b-binding residues include histidine 83 and histidine 117. The Lumenal segment spans residues 103–119 (KNHNESHIPNLYSLHSW). The helical transmembrane segment at 120–140 (IGIGVISLYGFQWVYSFIVFF) threads the bilayer. Residues 141 to 155 (FPGGSTNLKSGLLPW) lie on the Cytoplasmic side of the membrane. Position 156 (histidine 156) interacts with heme b. A helical transmembrane segment spans residues 156–176 (HAMLGLFVYILAVGNAALGFL). Over 177–193 (EKLTFLENGGLDKYGSE) the chain is Lumenal. A helical membrane pass occupies residues 194–214 (AFLINFTAIITILFGAFVVLT). Residues 215-239 (ASAESPSPSPSVSNDDSVDFSYSAI) lie on the Cytoplasmic side of the membrane. The disordered stretch occupies residues 217 to 239 (AESPSPSPSVSNDDSVDFSYSAI). Low complexity predominate over residues 224 to 239 (PSVSNDDSVDFSYSAI).

As to quaternary structure, homodimer. Heme b is required as a cofactor. Expressed in roots, seedlings and leaves. Lower expression in flowers. Expressed in the L1 layer of the shoot apex, in the epidermis of leaf primordia and young leaves and in vascular bundles. In the differentiation zone of the root, detected in the pericycle and in the epidermis, but not in the cortex. Strongly expressed in the lateral part of the root cap and in the epidermis of the root tip, but not in the meristematic tissue. Not expressed in lateral roots. In mature embryos, expressed in the epidermis, cotyledon tips and root tips.

It is found in the vacuole membrane. The enzyme catalyses Fe(3+)(out) + L-ascorbate(in) = monodehydro-L-ascorbate radical(in) + Fe(2+)(out) + H(+). Two-heme-containing cytochrome. Catalyzes ascorbate-dependent trans-membrane ferric-chelate reduction. Able to use dihydrolipoic acid (DHLA) as an alternative substrate to ascorbate. The polypeptide is Transmembrane ascorbate ferrireductase 1 (CYB561A) (Arabidopsis thaliana (Mouse-ear cress)).